The following is a 222-amino-acid chain: Deoxyribose-phosphate aldolase (222 aa).

The active-site Proton donor/acceptor is the D89. Catalysis depends on K152, which acts as the Schiff-base intermediate with acetaldehyde. The active-site Proton donor/acceptor is K181.

It belongs to the DeoC/FbaB aldolase family. DeoC type 1 subfamily.

It localises to the cytoplasm. The enzyme catalyses 2-deoxy-D-ribose 5-phosphate = D-glyceraldehyde 3-phosphate + acetaldehyde. Its pathway is carbohydrate degradation; 2-deoxy-D-ribose 1-phosphate degradation; D-glyceraldehyde 3-phosphate and acetaldehyde from 2-deoxy-alpha-D-ribose 1-phosphate: step 2/2. Its function is as follows. Catalyzes a reversible aldol reaction between acetaldehyde and D-glyceraldehyde 3-phosphate to generate 2-deoxy-D-ribose 5-phosphate. This chain is Deoxyribose-phosphate aldolase, found in Clostridium novyi (strain NT).